Here is a 518-residue protein sequence, read N- to C-terminus: Ent-cassadiene hydroxylase (518 aa).

A helical membrane pass occupies residues 6 to 26 (LILALGLSVLFVLLSKLVSSA). Residue Cys-451 participates in heme binding.

Belongs to the cytochrome P450 family. The cofactor is heme.

The protein localises to the membrane. The enzyme catalyses ent-cassa-12,15-diene + 3 reduced [NADPH--hemoprotein reductase] + 3 O2 = ent-3beta-hydroxycassa-12,15-dien-2-one + 3 oxidized [NADPH--hemoprotein reductase] + 4 H2O + 3 H(+). Enzyme of the diterpenoid metabolism involved in the biosynthesis of antibacterial oryzalides such as phytocassane. Catalyzes the hydroxylation of ent-cassa-12,15-diene to form ent-3beta-hydroxycassa-12,15-dien-2-one. The protein is Ent-cassadiene hydroxylase (CYP71Z7) of Oryza sativa subsp. japonica (Rice).